A 302-amino-acid chain; its full sequence is Sulfate adenylyltransferase subunit 2 (302 aa).

The protein belongs to the PAPS reductase family. CysD subfamily. As to quaternary structure, heterodimer composed of CysD, the smaller subunit, and CysN.

The catalysed reaction is sulfate + ATP + H(+) = adenosine 5'-phosphosulfate + diphosphate. It functions in the pathway sulfur metabolism; hydrogen sulfide biosynthesis; sulfite from sulfate: step 1/3. Its function is as follows. With CysN forms the ATP sulfurylase (ATPS) that catalyzes the adenylation of sulfate producing adenosine 5'-phosphosulfate (APS) and diphosphate, the first enzymatic step in sulfur assimilation pathway. APS synthesis involves the formation of a high-energy phosphoric-sulfuric acid anhydride bond driven by GTP hydrolysis by CysN coupled to ATP hydrolysis by CysD. This is Sulfate adenylyltransferase subunit 2 from Shewanella halifaxensis (strain HAW-EB4).